Reading from the N-terminus, the 755-residue chain is 3-isopropylmalate dehydratase (755 aa).

Residues Cys-353, Cys-413, and Cys-416 each contribute to the [4Fe-4S] cluster site. Disordered regions lie at residues 427-446, 471-493, and 510-529; these read GERC…GAGG, LTPA…ELEP, and DAPA…AAGM. Positions 510 to 528 are enriched in low complexity; sequence DAPATGASPPSPAPSDAAG.

The protein belongs to the aconitase/IPM isomerase family. In terms of assembly, monomer. [4Fe-4S] cluster is required as a cofactor.

The catalysed reaction is (2R,3S)-3-isopropylmalate = (2S)-2-isopropylmalate. It functions in the pathway amino-acid biosynthesis; L-leucine biosynthesis; L-leucine from 3-methyl-2-oxobutanoate: step 2/4. Its function is as follows. Catalyzes the isomerization between 2-isopropylmalate and 3-isopropylmalate, via the formation of 2-isopropylmaleate. This chain is 3-isopropylmalate dehydratase (LEUA), found in Rhizomucor pusillus.